The primary structure comprises 906 residues: MISTLLTKIIGSRNDRTLKALRKIVKQINAMEPQFEALSDSELQAKTAEYRQRLEQGETLDQLLPEAFATVREASKRVFGMRHFDVQLIGSMVLDSNRIAEMKTGEGKTLTATLPAYLNALSGRGVHVVTVNDYLAKRDAEANRPLFTFLGMTVDCNVPGMDASQKRDAYAADITYGTNNEFGFDYLRDNMAFSPEQRVQRPLNYALVDEVDSVLIDEARTPLIISGPAEDSSALYIQVNKLIPQLIKQDKEDTEEYTGEGHYTVDEKNRQALLTENGQIFVEELLKREDLLAEEDSLFSATNISLLHHVNAGLRAHTLFERNVDYIVQKDEIVIVDEHTGRTMPGRRWSDGLHQAVEAKEGVKIQNENQTLASITFQNYFRLYDKLAGMTGTADTEAFEFQQIYGLDTVVIPTNKPMVRKDMGDLVYLTAQEKYAAIVEDIRGCVSRGQPVLVGTVSIENSELLSGILTKENIPHKVLNAKFHAMEAEIVAQAGQLGAVTIATNMAGRGTDIVLGGNWQAEIAQLDNPTDEQIAELKAAWQVRHDEVLAAGGLHIIGTERHESRRIDNQLRGRSGRQGDPGSSRFYLSMEDTLMRIFASDRVTGMMKKLGMEEGEAIEHPWVTKAIENAQRKVEGRNFDIRKSLLEFDDVANDQRKVVYEQRNELLDTNDISETIHVIRDDVYGAVIDEYIPPQSLEEMWDVPGLEARLKADFGLDLPLQQWLAEDDKLYEEKLRERILDEATKLYAHKQELVGVEVLRNFEKAVMLQTLDGLWKEHLAAMDHLRQGIHLRGYAQKNPKQEYKRESFDLFTQMLETLKRDVVSILSRVQVQERDVEALEEQQRQQSEAAPRTYTHATAESQLADEEAAGEEGHTTFVRDEQKIGRNDPCPCGSGKKYKHCHGQLT.

Residues Gln-87, 105–109, and Asp-512 contribute to the ATP site; that span reads GEGKT. Residues 839-896 are disordered; sequence LEEQQRQQSEAAPRTYTHATAESQLADEEAAGEEGHTTFVRDEQKIGRNDPCPCGSGK. Positions 871–886 are enriched in basic and acidic residues; that stretch reads EEGHTTFVRDEQKIGR. The Zn(2+) site is built by Cys-890, Cys-892, Cys-901, and His-902.

The protein belongs to the SecA family. Monomer and homodimer. Part of the essential Sec protein translocation apparatus which comprises SecA, SecYEG and auxiliary proteins SecDF-YajC and YidC. Requires Zn(2+) as cofactor.

Its subcellular location is the cell inner membrane. It localises to the cytoplasm. The catalysed reaction is ATP + H2O + cellular proteinSide 1 = ADP + phosphate + cellular proteinSide 2.. In terms of biological role, part of the Sec protein translocase complex. Interacts with the SecYEG preprotein conducting channel. Has a central role in coupling the hydrolysis of ATP to the transfer of proteins into and across the cell membrane, serving both as a receptor for the preprotein-SecB complex and as an ATP-driven molecular motor driving the stepwise translocation of polypeptide chains across the membrane. The protein is Protein translocase subunit SecA of Aeromonas salmonicida (strain A449).